Here is a 296-residue protein sequence, read N- to C-terminus: GTPase Era (296 aa).

The 168-residue stretch at 7-174 (RTGFVAVVGR…LDEIAARLPE (168 aa)) folds into the Era-type G domain. The tract at residues 15-22 (GRPNVGKS) is G1. 15 to 22 (GRPNVGKS) contacts GTP. The G2 stretch occupies residues 41–45 (QTTRH). Residues 62–65 (DTPG) form a G3 region. Residues 62 to 66 (DTPGF) and 123 to 126 (SKID) each bind GTP. Residues 123–126 (SKID) form a G4 region. The tract at residues 153–155 (VSA) is G5. Residues 205–281 (VGDELPYGCT…HLEVYIKVRK (77 aa)) enclose the KH type-2 domain.

It belongs to the TRAFAC class TrmE-Era-EngA-EngB-Septin-like GTPase superfamily. Era GTPase family. Monomer.

The protein resides in the cytoplasm. The protein localises to the cell inner membrane. Functionally, an essential GTPase that binds both GDP and GTP, with rapid nucleotide exchange. Plays a role in 16S rRNA processing and 30S ribosomal subunit biogenesis and possibly also in cell cycle regulation and energy metabolism. The chain is GTPase Era from Bordetella petrii (strain ATCC BAA-461 / DSM 12804 / CCUG 43448).